Consider the following 131-residue polypeptide: CLAVATA3/ESR (CLE)-related protein ESR1 (131 aa).

The signal sequence occupies residues 1–26 (MASRMGMVAIVSLFVCALAASTSVNA). The interval 49–131 (RQQQQGGFIG…IGPPPLSDRY (83 aa)) is disordered. A hydroxyproline mark is found at P81 and P84. P84 carries O-linked (Ara...) hydroxyproline glycosylation.

It belongs to the CLV3/ESR signal peptide family. In terms of processing, the O-glycosylation (arabinosylation) of the hydroxyproline Pro-84 enhances binding affinity of the ESR1p peptide for its receptor. Seed endosperm.

It localises to the secreted. It is found in the extracellular space. Its function is as follows. Extracellular signal peptide that regulates cell fate. This Zea mays (Maize) protein is CLAVATA3/ESR (CLE)-related protein ESR1.